A 273-amino-acid chain; its full sequence is Putative pyruvate, phosphate dikinase regulatory protein (273 aa).

153–160 provides a ligand contact to ADP; sequence GVSRTSKS.

This sequence belongs to the pyruvate, phosphate/water dikinase regulatory protein family. PDRP subfamily.

The catalysed reaction is N(tele)-phospho-L-histidyl/L-threonyl-[pyruvate, phosphate dikinase] + ADP = N(tele)-phospho-L-histidyl/O-phospho-L-threonyl-[pyruvate, phosphate dikinase] + AMP + H(+). It carries out the reaction N(tele)-phospho-L-histidyl/O-phospho-L-threonyl-[pyruvate, phosphate dikinase] + phosphate + H(+) = N(tele)-phospho-L-histidyl/L-threonyl-[pyruvate, phosphate dikinase] + diphosphate. Bifunctional serine/threonine kinase and phosphorylase involved in the regulation of the pyruvate, phosphate dikinase (PPDK) by catalyzing its phosphorylation/dephosphorylation. The polypeptide is Putative pyruvate, phosphate dikinase regulatory protein (Ehrlichia ruminantium (strain Welgevonden)).